Reading from the N-terminus, the 335-residue chain is Probable G-protein coupled receptor 174 (335 aa).

Topologically, residues 1-27 (MTDNFTCNKTDGDNTDFRYFIYAVTYT) are extracellular. N4 and N8 each carry an N-linked (GlcNAc...) asparagine glycan. Residues 28–48 (VILVPGLIGNILALWVFYGYM) form a helical membrane-spanning segment. The Cytoplasmic portion of the chain corresponds to 49 to 53 (KETKR). A helical membrane pass occupies residues 54-74 (AVVFMINLAIADLLQILSLPL). Residues 75-91 (RIFYYLNHDWPFGPGLC) are Extracellular-facing. Cysteines 91 and 168 form a disulfide. Residues 92–112 (MFCFYLKYVNMYASIYFLVCI) form a helical membrane-spanning segment. Over 113 to 134 (SVRRFWFLMYPFRFNDCKQKYD) the chain is Cytoplasmic. A helical transmembrane segment spans residues 135–155 (LYISIIGWLIICLACLLFPLL). At 156-182 (RTNDDTPGNRTKCFVDLPIRNVNLAQS) the chain is on the extracellular side. The N-linked (GlcNAc...) asparagine glycan is linked to N164. A helical transmembrane segment spans residues 183–203 (VAMITIGEVVGFVTPLMIVLY). Over 204–231 (CTWKTALSLQNKYPISQHLGEKKKALKM) the chain is Cytoplasmic. A helical membrane pass occupies residues 232–252 (ILTCAGVFLVCFVPYHFSFPL). The Extracellular portion of the chain corresponds to 253–268 (DFLVKSNEIKSCFARR). The chain crosses the membrane as a helical span at residues 269-289 (VILIFHSVALCLASLNSCLDP). The Cytoplasmic segment spans residues 290–335 (VIYYFTTNEFRRRLSRQDLPDNIQLHTKSYKIASNHATSTVAAELC).

Belongs to the G-protein coupled receptor 1 family. As to quaternary structure, interacts with GNA13. Interacts with CCL21. As to expression, expressed in spleen and, at low levels, in brain. Highly expressed in developing and mature regulatory T-cells.

It is found in the cell membrane. Its function is as follows. G-protein-coupled receptor of lysophosphatidylserine (LysoPS) that plays different roles in immune response. Plays a negative role in regulatory T-cell accumulation and homeostasis. Under inflammatory conditions where LysoPS production increases, contributes to the down-regulation of regulatory T-cell activity to favor effector response. Mediates the suppression of IL-2 production in activated T-lymphocytes leading to inhibition of growth, proliferation and differentiation of T-cells. Mechanistically, acts via G(s)-containing heterotrimeric G proteins to trigger elevated cyclic AMP levels and protein kinase A/PKA activity, which may in turn act to antagonize proximal TCR signaling. Plays an important role in the initial period of sepsis through the regulation of macrophage polarization and pro- and anti-inflammatory cytokine secretions. Upon testosterone treatment, acts as a receptor for CCL21 and subsequently triggers through G(q)-alpha and G(12)/G(13) proteins a calcium flux leading to chemotactic effects on activated B-cells. Signals via GNA13 and PKA to promote CD86 up-regulation by follicular B-cells. This chain is Probable G-protein coupled receptor 174 (Gpr174), found in Mus musculus (Mouse).